We begin with the raw amino-acid sequence, 1073 residues long: MVGMEWDTGARGLTGRPLPWSMVEGILSGREVGTPRPVLHEAEPECLSTPRPGPGSTEVPGERRGSRQGERSGEIPFVELHATSSYNFLAGASDPGEMVDRAHELGLSALALVDRDGLYGAVRFAEAAAEVGLATVFGAELSLREGVLTVLCRGVEGYRRLSHLITGAAMSAGEKGSVDYPLLPQVAEQGAGHWVVLAGVEWQKKIDHLIECFGRDNVVLEFPARMLPEDTDHHDILRSIQTRTGLRGILSTMPTAATRDHVRLAGAKCALALRANLAEAESSLHPMGGTWLRSGGALARAYPQCGDLLATTVEIASGCAFTFDLVAPELPRWDTPDGHTEMTWLTHLVESRFDRRYRSRPAEVRERARAQIRHELGVIEQLGFPGYFLIVDDLVQFCHNATILCQGRGSAANSAVCFVLGITNAEPITAGLLFERFLSRDRDGPPDIDIDIESGRREEVIQYVYTRYGRDNAAQVANVITYRTKGALRDAARALGYPQGTVDAWSRGASEPPADVVELAGQLKGQPRHLGIHSGGMVICDRPIADVVPTEWARMEGRSVVQWDKDDCAAAGLVKFDLLGLGMLEALHHMMDLVAHHRGITVNLWELDLADAGVYDMLCRADAVGVFQVESRAQMSTLPRLKPRTFFDLVVEVALIRPGPIQGGSVHPYLRRRSGEEAVTYDHPVLEKSLGKTLGIPLFQEQIMQIAVDAAGFTGGEADALRRAMGSKRSPTRMAALRSRFYQGLADTHGIIGDTADKLWNKMVAFAAYGFPESHSQSFATLVYFSAWFKHHYPAEFCAGLLRAQPMGFYSPQSLIADARRHGVEILPISINESGVQADAPDGHLRLGLDLVKGLGEEAARRIAEHAPYTSIPDLSRRADLGVAHIEALARAGALDCLGVGRREALWQAGIAATERPGMLPGISAIEAPALPGMSAFELMATSIAATGVTHDAQPMALLRAHLDALGVVPADRLLTDVADGTRVRIAGVVTHRQRPQTASGVTFLGLEDETGLMNVMVSPGLWDRQRVLARTAKTLIIRGIVQNATGAVNVVADKLEPLPVGEWLSRGSRDFR.

The disordered stretch occupies residues Glu-41–Gly-73. Residues Pro-60 to Gly-73 are compositionally biased toward basic and acidic residues.

This sequence belongs to the DNA polymerase type-C family. DnaE2 subfamily.

It is found in the cytoplasm. The enzyme catalyses DNA(n) + a 2'-deoxyribonucleoside 5'-triphosphate = DNA(n+1) + diphosphate. DNA polymerase involved in damage-induced mutagenesis and translesion synthesis (TLS). It is not the major replicative DNA polymerase. The protein is Error-prone DNA polymerase of Corynebacterium efficiens (strain DSM 44549 / YS-314 / AJ 12310 / JCM 11189 / NBRC 100395).